The chain runs to 691 residues: Lipase 2 (691 aa).

The first 37 residues, 1–37 (MLRGQEERKYSIRKYSIGVVSVLAATMFVVSSHEAQA), serve as a signal peptide directing secretion. The segment covering 34-72 (EAQASEKTPTSNAAAQKETLNQPGEQGNAITSHQMQSGK) has biased composition (polar residues). The tract at residues 34–267 (EAQASEKTPT…KPTDKNTDNK (234 aa)) is disordered. Positions 38–296 (SEKTPTSNAA…ADAKKVRPLK (259 aa)) are excised as a propeptide. Residues 73–82 (QLDDMHKENG) show a composition bias toward basic and acidic residues. 3 stretches are compositionally biased toward polar residues: residues 83 to 115 (KSGTVTEGKDTLQSSKHQSTQNSKTIRTQNDNQ), 125 to 172 (SKQS…QPSI), and 186 to 207 (PTSTTPPSNDKTAPKSTKAQDA). Basic and acidic residues-rich tracts occupy residues 226–238 (IDAKQDDTVRQSE) and 258–267 (KPTDKNTDNK). Catalysis depends on Ser-413, which acts as the Nucleophile. Gly-580 provides a ligand contact to Ca(2+). The active-site Charge relay system is the Asp-604. Position 645 (Asp-645) interacts with Ca(2+). His-646 serves as the catalytic Charge relay system. The Ca(2+) site is built by Asp-648, Asp-653, and Asp-656.

The protein belongs to the AB hydrolase superfamily. Lipase family.

It localises to the secreted. The enzyme catalyses a triacylglycerol + H2O = a diacylglycerol + a fatty acid + H(+). This chain is Lipase 2 (lip2), found in Staphylococcus aureus (strain Mu50 / ATCC 700699).